Reading from the N-terminus, the 374-residue chain is DNA integrity scanning protein DisA (374 aa).

A DAC domain is found at 20 to 158 (DGLMRASLSA…DGMRRVLEDS (139 aa)). Residues Gly-87, Leu-105, and 118–122 (TRHRT) each bind ATP.

The protein belongs to the DisA family. In terms of assembly, homooctamer. It depends on Mg(2+) as a cofactor.

The catalysed reaction is 2 ATP = 3',3'-c-di-AMP + 2 diphosphate. In terms of biological role, participates in a DNA-damage check-point that is active prior to asymmetric division when DNA is damaged. DisA forms globular foci that rapidly scan along the chromosomes during sporulation, searching for lesions. When a lesion is present, DisA pauses at the lesion site. This triggers a cellular response that culminates in a temporary block in sporulation initiation. Functionally, also has diadenylate cyclase activity, catalyzing the condensation of 2 ATP molecules into cyclic di-AMP (c-di-AMP). c-di-AMP acts as a signaling molecule that couples DNA integrity with progression of sporulation. The rise in c-di-AMP level generated by DisA while scanning the chromosome, operates as a positive signal that advances sporulation; upon encountering a lesion, the DisA focus arrests at the damaged site and halts c-di-AMP synthesis. This chain is DNA integrity scanning protein DisA, found in Streptomyces avermitilis (strain ATCC 31267 / DSM 46492 / JCM 5070 / NBRC 14893 / NCIMB 12804 / NRRL 8165 / MA-4680).